The chain runs to 331 residues: Ribosomal RNA small subunit methyltransferase C (331 aa).

The protein belongs to the methyltransferase superfamily. RsmC family. In terms of assembly, monomer.

It is found in the cytoplasm. It carries out the reaction guanosine(1207) in 16S rRNA + S-adenosyl-L-methionine = N(2)-methylguanosine(1207) in 16S rRNA + S-adenosyl-L-homocysteine + H(+). Its function is as follows. Specifically methylates the guanine in position 1207 of 16S rRNA in the 30S particle. The chain is Ribosomal RNA small subunit methyltransferase C from Ectopseudomonas mendocina (strain ymp) (Pseudomonas mendocina).